A 251-amino-acid polypeptide reads, in one-letter code: Triosephosphate isomerase (251 aa).

8-10 is a substrate binding site; that stretch reads NWK. His-97 serves as the catalytic Electrophile. The active-site Proton acceptor is the Glu-170. Residues Gly-176, Ser-215, and 236–237 each bind substrate; that span reads GG.

It belongs to the triosephosphate isomerase family. Homodimer.

The protein localises to the cytoplasm. The enzyme catalyses D-glyceraldehyde 3-phosphate = dihydroxyacetone phosphate. It participates in carbohydrate biosynthesis; gluconeogenesis. Its pathway is carbohydrate degradation; glycolysis; D-glyceraldehyde 3-phosphate from glycerone phosphate: step 1/1. Functionally, involved in the gluconeogenesis. Catalyzes stereospecifically the conversion of dihydroxyacetone phosphate (DHAP) to D-glyceraldehyde-3-phosphate (G3P). The polypeptide is Triosephosphate isomerase (Nitratidesulfovibrio vulgaris (strain DSM 19637 / Miyazaki F) (Desulfovibrio vulgaris)).